We begin with the raw amino-acid sequence, 245 residues long: DNA polymerase sliding clamp 1 (245 aa).

Belongs to the PCNA family. Homotrimer. The subunits circularize to form a toroid; DNA passes through its center. Replication factor C (RFC) is required to load the toroid on the DNA.

Sliding clamp subunit that acts as a moving platform for DNA processing. Responsible for tethering the catalytic subunit of DNA polymerase and other proteins to DNA during high-speed replication. The sequence is that of DNA polymerase sliding clamp 1 from Sulfurisphaera ohwakuensis.